A 269-amino-acid chain; its full sequence is Tryptophan synthase alpha chain (269 aa).

Catalysis depends on proton acceptor residues Glu-49 and Asp-60.

Belongs to the TrpA family. Tetramer of two alpha and two beta chains.

It carries out the reaction (1S,2R)-1-C-(indol-3-yl)glycerol 3-phosphate + L-serine = D-glyceraldehyde 3-phosphate + L-tryptophan + H2O. It functions in the pathway amino-acid biosynthesis; L-tryptophan biosynthesis; L-tryptophan from chorismate: step 5/5. Its function is as follows. The alpha subunit is responsible for the aldol cleavage of indoleglycerol phosphate to indole and glyceraldehyde 3-phosphate. The sequence is that of Tryptophan synthase alpha chain from Pseudomonas syringae pv. syringae.